The following is a 334-amino-acid chain: Anthranilate phosphoribosyltransferase (334 aa).

Residues Gly79, Gly82 to Asp83, Ser87, Asn89 to Thr92, Lys107 to Ser115, and Ser119 contribute to the 5-phospho-alpha-D-ribose 1-diphosphate site. Gly79 provides a ligand contact to anthranilate. A Mg(2+)-binding site is contributed by Ser91. Anthranilate is bound at residue Asn110. Arg165 contacts anthranilate. Mg(2+) contacts are provided by Asp224 and Glu225.

The protein belongs to the anthranilate phosphoribosyltransferase family. As to quaternary structure, homodimer. Requires Mg(2+) as cofactor.

The enzyme catalyses N-(5-phospho-beta-D-ribosyl)anthranilate + diphosphate = 5-phospho-alpha-D-ribose 1-diphosphate + anthranilate. Its pathway is amino-acid biosynthesis; L-tryptophan biosynthesis; L-tryptophan from chorismate: step 2/5. Functionally, catalyzes the transfer of the phosphoribosyl group of 5-phosphorylribose-1-pyrophosphate (PRPP) to anthranilate to yield N-(5'-phosphoribosyl)-anthranilate (PRA). The sequence is that of Anthranilate phosphoribosyltransferase from Streptococcus pneumoniae (strain 70585).